We begin with the raw amino-acid sequence, 142 residues long: Small ribosomal subunit protein uS12 (142 aa).

It belongs to the universal ribosomal protein uS12 family. Part of the 30S ribosomal subunit.

Functionally, with S4 and S5 plays an important role in translational accuracy. Located at the interface of the 30S and 50S subunits. This Methanosarcina mazei (strain ATCC BAA-159 / DSM 3647 / Goe1 / Go1 / JCM 11833 / OCM 88) (Methanosarcina frisia) protein is Small ribosomal subunit protein uS12.